The chain runs to 1088 residues: RNA-directed RNA polymerase (1088 aa).

The RdRp catalytic domain maps to 501–687 (LSYGDVTRFL…AKRYIAGGKI (187 aa)).

Belongs to the reoviridae RNA-directed RNA polymerase family. Interacts with VP3 (Potential). Interacts with VP2; this interaction activates VP1. Interacts with NSP5; this interaction is probably necessary for the formation of functional virus factories. Interacts with NSP2; this interaction is weak. The cofactor is Mg(2+).

The protein localises to the virion. It catalyses the reaction RNA(n) + a ribonucleoside 5'-triphosphate = RNA(n+1) + diphosphate. RNA-directed RNA polymerase that is involved in both transcription and genome replication. Together with VP3 capping enzyme, forms an enzyme complex positioned near the channels situated at each of the five-fold vertices of the core. Following infection, the outermost layer of the virus is lost, leaving a double-layered particle (DLP) made up of the core and VP6 shell. VP1 then catalyzes the transcription of fully conservative plus-strand genomic RNAs that are extruded through the DLP's channels into the cytoplasm where they function as mRNAs for translation of viral proteins. One copy of each of the viral (+)RNAs is also recruited during core assembly, together with newly synthesized polymerase complexes and VP2. The polymerase of these novo-formed particles catalyzes the synthesis of complementary minus-strands leading to dsRNA formation. To do so, the polymerase specifically recognizes and binds 4 bases 5'-UGUG-3' in the conserved 3'-sequence of plus-strand RNA templates. VP2 presumably activates the autoinhibited VP1-RNA complex to coordinate packaging and genome replication. Once dsRNA synthesis is complete, the polymerase switches to the transcriptional mode, thus providing secondary transcription. This Rotavirus A (strain RVA/Human/United States/Wa/1974/G1P1A[8]) (RV-A) protein is RNA-directed RNA polymerase.